Reading from the N-terminus, the 1041-residue chain is Integrator complex subunit 3 (1041 aa).

Met-1 is modified (N-acetylmethionine). Residues Ser-500, Ser-535, and Ser-993 each carry the phosphoserine modification. The tract at residues 975–1041 (YEDSSTKPPK…GSSAVGSDSD (67 aa)) is disordered. Over residues 1006–1020 (AEEESGSSSASEEED) the composition is skewed to acidic residues.

It belongs to the Integrator subunit 3 family. In terms of assembly, component of the Integrator complex, composed of core subunits INTS1, INTS2, INTS3, INTS4, INTS5, INTS6, INTS7, INTS8, INTS9/RC74, INTS10, INTS11/CPSF3L, INTS12, INTS13, INTS14 and INTS15. The core complex associates with protein phosphatase 2A subunits PPP2CA and PPP2R1A, to form the Integrator-PP2A (INTAC) complex. Component of the SOSS complex, composed of SOSS-B (SOSS-B1/NABP2 or SOSS-B2/NABP1), SOSS-A/INTS3 and SOSS-C/INIP. SOSS complexes containing SOSS-B1/NABP2 are more abundant than complexes containing SOSS-B2/NABP1. Interacts with SOSS-B1/NABP2, SOSS-B2/NABP1 and SOSS-C/INIP; the interaction is direct. Interacts with NBN/NBS1.

The protein resides in the nucleus. It is found in the cytoplasm. In terms of biological role, component of the integrator complex, a multiprotein complex that terminates RNA polymerase II (Pol II) transcription in the promoter-proximal region of genes. The integrator complex provides a quality checkpoint during transcription elongation by driving premature transcription termination of transcripts that are unfavorably configured for transcriptional elongation: the complex terminates transcription by (1) catalyzing dephosphorylation of the C-terminal domain (CTD) of Pol II subunit POLR2A/RPB1 and SUPT5H/SPT5, (2) degrading the exiting nascent RNA transcript via endonuclease activity and (3) promoting the release of Pol II from bound DNA. The integrator complex is also involved in terminating the synthesis of non-coding Pol II transcripts, such as enhancer RNAs (eRNAs), small nuclear RNAs (snRNAs), telomerase RNAs and long non-coding RNAs (lncRNAs). Within the integrator complex, INTS3 is involved in the post-termination step: INTS3 binds INTS7 in the open conformation of integrator complex and prevents the rebinding of Pol II to the integrator after termination cycle. Mediates recruitment of cytoplasmic dynein to the nuclear envelope, probably as component of the integrator complex. Its function is as follows. Component of the SOSS complex, a multiprotein complex that functions downstream of the MRN complex to promote DNA repair and G2/M checkpoint. The SOSS complex associates with single-stranded DNA at DNA lesions and influences diverse endpoints in the cellular DNA damage response including cell-cycle checkpoint activation, recombinational repair and maintenance of genomic stability. The SOSS complex is required for efficient homologous recombination-dependent repair of double-strand breaks (DSBs) and ATM-dependent signaling pathways. In the SOSS complex, it is required for the assembly of the complex and for stabilization of the complex at DNA damage sites. The sequence is that of Integrator complex subunit 3 (Ints3) from Mus musculus (Mouse).